The following is a 504-amino-acid chain: Cytochrome P450 7A1 (504 aa).

The chain crosses the membrane as a helical span at residues 4-24 (TSLIWGIAIAACCCLWLILGI). Residue cysteine 444 coordinates heme.

This sequence belongs to the cytochrome P450 family. The cofactor is heme. As to expression, detected in liver.

The protein resides in the endoplasmic reticulum membrane. The protein localises to the microsome membrane. The enzyme catalyses cholesterol + reduced [NADPH--hemoprotein reductase] + O2 = 7alpha-hydroxycholesterol + oxidized [NADPH--hemoprotein reductase] + H2O + H(+). The catalysed reaction is 4beta-hydroxycholesterol + reduced [NADPH--hemoprotein reductase] + O2 = 4beta,7alpha-dihydroxycholesterol + oxidized [NADPH--hemoprotein reductase] + H2O + H(+). It catalyses the reaction lathosterol + reduced [NADPH--hemoprotein reductase] + O2 = 7alpha,8alpha-epoxy-5alpha-cholestan-3beta-ol + oxidized [NADPH--hemoprotein reductase] + H2O + H(+). It carries out the reaction lathosterol + reduced [NADPH--hemoprotein reductase] + O2 = 5alpha-cholestan-7-oxo-3beta-ol + oxidized [NADPH--hemoprotein reductase] + H2O + H(+). The enzyme catalyses 7-dehydrocholesterol + reduced [NADPH--hemoprotein reductase] + O2 = 7-oxocholesterol + oxidized [NADPH--hemoprotein reductase] + H2O + H(+). The catalysed reaction is (24S)-hydroxycholesterol + reduced [NADPH--hemoprotein reductase] + O2 = (24S)-7alpha-dihydroxycholesterol + oxidized [NADPH--hemoprotein reductase] + H2O + H(+). It catalyses the reaction (24R)-hydroxycholesterol + reduced [NADPH--hemoprotein reductase] + O2 = (24R)-7alpha-dihydroxycholesterol + oxidized [NADPH--hemoprotein reductase] + H2O + H(+). It participates in lipid metabolism; bile acid biosynthesis. It functions in the pathway steroid metabolism; cholesterol degradation. A cytochrome P450 monooxygenase involved in the metabolism of endogenous cholesterol and its oxygenated derivatives (oxysterols). Mechanistically, uses molecular oxygen inserting one oxygen atom into a substrate, and reducing the second into a water molecule, with two electrons provided by NADPH via cytochrome P450 reductase (CPR; NADPH-ferrihemoprotein reductase). Functions as a critical regulatory enzyme of bile acid biosynthesis and cholesterol homeostasis. Catalyzes the hydroxylation of carbon hydrogen bond at 7-alpha position of cholesterol, a rate-limiting step in cholesterol catabolism and bile acid biosynthesis. 7-alpha hydroxylates several oxysterols, including 4beta-hydroxycholesterol and 24-hydroxycholesterol. Catalyzes the oxidation of the 7,8 double bond of 7-dehydrocholesterol and lathosterol with direct and predominant formation of the 7-keto derivatives. This chain is Cytochrome P450 7A1, found in Homo sapiens (Human).